A 31-amino-acid polypeptide reads, in one-letter code: Cyclotide vico-B (31 aa).

Residues 1–31 (GSIPCAESCVYIPCITGIAGCSCKNKVCYYN) constitute a cross-link (cyclopeptide (Gly-Asn)). 3 disulfide bridges follow: C5-C21, C9-C23, and C14-C28.

Belongs to the cyclotide family. Bracelet subfamily. This is a cyclic peptide.

Its function is as follows. Probably participates in a plant defense mechanism. This is Cyclotide vico-B from Viola cotyledon (Violeta).